Consider the following 350-residue polypeptide: Biotin synthase 1 (350 aa).

The Radical SAM core domain maps to 71–296 (EEVEVEGIIS…KTILRFAGGR (226 aa)). 3 residues coordinate [4Fe-4S] cluster: C86, C90, and C93. [2Fe-2S] cluster-binding residues include C129, C221, and R291.

Belongs to the radical SAM superfamily. Biotin synthase family. Homodimer. [4Fe-4S] cluster is required as a cofactor. [2Fe-2S] cluster serves as cofactor.

The catalysed reaction is (4R,5S)-dethiobiotin + (sulfur carrier)-SH + 2 reduced [2Fe-2S]-[ferredoxin] + 2 S-adenosyl-L-methionine = (sulfur carrier)-H + biotin + 2 5'-deoxyadenosine + 2 L-methionine + 2 oxidized [2Fe-2S]-[ferredoxin]. Its pathway is cofactor biosynthesis; biotin biosynthesis; biotin from 7,8-diaminononanoate: step 2/2. Catalyzes the conversion of dethiobiotin (DTB) to biotin by the insertion of a sulfur atom into dethiobiotin via a radical-based mechanism. This Corynebacterium diphtheriae (strain ATCC 700971 / NCTC 13129 / Biotype gravis) protein is Biotin synthase 1.